The chain runs to 440 residues: Methylenetetrahydrofolate--tRNA-(uracil-5-)-methyltransferase TrmFO (440 aa).

Residue 14–19 (GAGLAG) participates in FAD binding.

This sequence belongs to the MnmG family. TrmFO subfamily. FAD serves as cofactor.

Its subcellular location is the cytoplasm. It catalyses the reaction uridine(54) in tRNA + (6R)-5,10-methylene-5,6,7,8-tetrahydrofolate + NADH + H(+) = 5-methyluridine(54) in tRNA + (6S)-5,6,7,8-tetrahydrofolate + NAD(+). The enzyme catalyses uridine(54) in tRNA + (6R)-5,10-methylene-5,6,7,8-tetrahydrofolate + NADPH + H(+) = 5-methyluridine(54) in tRNA + (6S)-5,6,7,8-tetrahydrofolate + NADP(+). Its function is as follows. Catalyzes the folate-dependent formation of 5-methyl-uridine at position 54 (M-5-U54) in all tRNAs. The protein is Methylenetetrahydrofolate--tRNA-(uracil-5-)-methyltransferase TrmFO of Bdellovibrio bacteriovorus (strain ATCC 15356 / DSM 50701 / NCIMB 9529 / HD100).